The sequence spans 448 residues: tRNA modification GTPase MnmE (448 aa).

Positions 25, 83, and 122 each coordinate (6S)-5-formyl-5,6,7,8-tetrahydrofolate. One can recognise a TrmE-type G domain in the interval 218 to 372 (GFKVAIIGKP…LTQKLQKLLD (155 aa)). Residue N228 participates in K(+) binding. Residues 228 to 233 (NTGKSS), 247 to 253 (SDIAGTT), and 272 to 275 (DTAG) contribute to the GTP site. Mg(2+) is bound at residue S232. K(+) is bound by residues S247, I249, and T252. Position 253 (T253) interacts with Mg(2+). Position 448 (K448) interacts with (6S)-5-formyl-5,6,7,8-tetrahydrofolate.

It belongs to the TRAFAC class TrmE-Era-EngA-EngB-Septin-like GTPase superfamily. TrmE GTPase family. In terms of assembly, homodimer. Heterotetramer of two MnmE and two MnmG subunits. K(+) is required as a cofactor.

Its subcellular location is the cytoplasm. Its function is as follows. Exhibits a very high intrinsic GTPase hydrolysis rate. Involved in the addition of a carboxymethylaminomethyl (cmnm) group at the wobble position (U34) of certain tRNAs, forming tRNA-cmnm(5)s(2)U34. The chain is tRNA modification GTPase MnmE from Nitratiruptor sp. (strain SB155-2).